A 438-amino-acid polypeptide reads, in one-letter code: Flotillin-2 (438 aa).

This sequence belongs to the band 7/mec-2 family. Flotillin subfamily. In terms of assembly, heterooligomeric complex of flotillins 1 and 2.

It localises to the membrane. In terms of biological role, may play a role in axon growth and regeneration. May be involved in epidermal cell adhesion and epidermal structure and function. In Drosophila melanogaster (Fruit fly), this protein is Flotillin-2.